A 434-amino-acid polypeptide reads, in one-letter code: Nicotinate phosphoribosyltransferase (434 aa).

Position 242 is a phosphohistidine; by autocatalysis (H242).

The protein belongs to the NAPRTase family. In terms of processing, transiently phosphorylated on a His residue during the reaction cycle. Phosphorylation strongly increases the affinity for substrates and increases the rate of nicotinate D-ribonucleotide production. Dephosphorylation regenerates the low-affinity form of the enzyme, leading to product release.

It catalyses the reaction nicotinate + 5-phospho-alpha-D-ribose 1-diphosphate + ATP + H2O = nicotinate beta-D-ribonucleotide + ADP + phosphate + diphosphate. The protein operates within cofactor biosynthesis; NAD(+) biosynthesis; nicotinate D-ribonucleotide from nicotinate: step 1/1. Catalyzes the synthesis of beta-nicotinate D-ribonucleotide from nicotinate and 5-phospho-D-ribose 1-phosphate at the expense of ATP. The protein is Nicotinate phosphoribosyltransferase of Brucella anthropi (strain ATCC 49188 / DSM 6882 / CCUG 24695 / JCM 21032 / LMG 3331 / NBRC 15819 / NCTC 12168 / Alc 37) (Ochrobactrum anthropi).